The sequence spans 431 residues: MRTVVWQSLSETQQDAILERPAITEGANITAAVAEVIAKVRAEGDAALFELTEKFDRVKPESIRVTEQEIEEASARLTAKMKQALEQAYANIAKFHNAQKPTPIKVETQPGVVCEQVTRPIQKVGLYIPGGSAPLPSTVLMLGVPAQIAGCRKVVLCSPPPIADEILYVAKLCNIDEVYNVGGGQAVAAMAYGTESVTKVDKIFGPGNAYVTEAKRQVSNDFRGAAIDMPAGPSEVLVIADETADADFIAADLLSQAEHGPDSQVVLVTPSVLIADQVTDAVQKQLKQLSRASIAEKALASSLIIIADSLTQAVSISNYYGPEHLIVQTKNPRELLPLLDNAGSIFLGDWSPESAGDYASGTNHVLPTYGYTRTYSSLGLADFSKRMTIQELSAEGLKTLAPTVVTMAEAEGLDAHKRAVTIRVEKLNARG.

Positions 127, 185, and 208 each coordinate NAD(+). Substrate contacts are provided by Ser234, Gln256, and His259. 2 residues coordinate Zn(2+): Gln256 and His259. Residues Glu323 and His324 each act as proton acceptor in the active site. Substrate is bound by residues His324, Asp357, Glu411, and His416. Asp357 provides a ligand contact to Zn(2+). Residue His416 coordinates Zn(2+).

Belongs to the histidinol dehydrogenase family. The cofactor is Zn(2+).

The enzyme catalyses L-histidinol + 2 NAD(+) + H2O = L-histidine + 2 NADH + 3 H(+). Its pathway is amino-acid biosynthesis; L-histidine biosynthesis; L-histidine from 5-phospho-alpha-D-ribose 1-diphosphate: step 9/9. Functionally, catalyzes the sequential NAD-dependent oxidations of L-histidinol to L-histidinaldehyde and then to L-histidine. This Vibrio vulnificus (strain CMCP6) protein is Histidinol dehydrogenase.